A 131-amino-acid chain; its full sequence is ATP synthase epsilon chain (131 aa).

It belongs to the ATPase epsilon chain family. F-type ATPases have 2 components, CF(1) - the catalytic core - and CF(0) - the membrane proton channel. CF(1) has five subunits: alpha(3), beta(3), gamma(1), delta(1), epsilon(1). CF(0) has three main subunits: a, b and c.

It is found in the cell inner membrane. In terms of biological role, produces ATP from ADP in the presence of a proton gradient across the membrane. The protein is ATP synthase epsilon chain of Wolinella succinogenes (strain ATCC 29543 / DSM 1740 / CCUG 13145 / JCM 31913 / LMG 7466 / NCTC 11488 / FDC 602W) (Vibrio succinogenes).